A 319-amino-acid chain; its full sequence is Acetyl-coenzyme A carboxylase carboxyl transferase subunit alpha (319 aa).

The 255-residue stretch at 39 to 293 folds into the CoA carboxyltransferase C-terminal domain; sequence RLQKKSNDLT…KAVLEKQLHE (255 aa).

This sequence belongs to the AccA family. In terms of assembly, acetyl-CoA carboxylase is a heterohexamer composed of biotin carboxyl carrier protein (AccB), biotin carboxylase (AccC) and two subunits each of ACCase subunit alpha (AccA) and ACCase subunit beta (AccD).

Its subcellular location is the cytoplasm. The catalysed reaction is N(6)-carboxybiotinyl-L-lysyl-[protein] + acetyl-CoA = N(6)-biotinyl-L-lysyl-[protein] + malonyl-CoA. It participates in lipid metabolism; malonyl-CoA biosynthesis; malonyl-CoA from acetyl-CoA: step 1/1. Its function is as follows. Component of the acetyl coenzyme A carboxylase (ACC) complex. First, biotin carboxylase catalyzes the carboxylation of biotin on its carrier protein (BCCP) and then the CO(2) group is transferred by the carboxyltransferase to acetyl-CoA to form malonyl-CoA. This is Acetyl-coenzyme A carboxylase carboxyl transferase subunit alpha from Neisseria meningitidis serogroup A / serotype 4A (strain DSM 15465 / Z2491).